Consider the following 113-residue polypeptide: uncharacterized protein (113 aa).

Positions 28–55 (CDGGPRRPLSRRGEEARRARAPSYEEQE) are disordered.

This is an uncharacterized protein from Human cytomegalovirus (strain AD169) (HHV-5).